We begin with the raw amino-acid sequence, 131 residues long: Ribosome-binding factor A (131 aa).

Belongs to the RbfA family. Monomer. Binds 30S ribosomal subunits, but not 50S ribosomal subunits or 70S ribosomes.

The protein resides in the cytoplasm. Functionally, one of several proteins that assist in the late maturation steps of the functional core of the 30S ribosomal subunit. Associates with free 30S ribosomal subunits (but not with 30S subunits that are part of 70S ribosomes or polysomes). Required for efficient processing of 16S rRNA. May interact with the 5'-terminal helix region of 16S rRNA. This chain is Ribosome-binding factor A, found in Ruegeria pomeroyi (strain ATCC 700808 / DSM 15171 / DSS-3) (Silicibacter pomeroyi).